The following is a 255-amino-acid chain: Putative enoyl-CoA hydratase/isomerase YhaR (255 aa).

Helical transmembrane passes span 96-116 and 126-146; these read VTIA…ALCA and VLAM…HYLL.

This sequence belongs to the enoyl-CoA hydratase/isomerase family.

Its subcellular location is the cell membrane. In Bacillus subtilis (strain 168), this protein is Putative enoyl-CoA hydratase/isomerase YhaR (yhaR).